A 376-amino-acid chain; its full sequence is UDP-N-acetylglucosamine 2-epimerase (376 aa).

Substrate is bound by residues arginine 10, lysine 15, aspartate 95, glutamate 117, histidine 213, glutamine 271, phenylalanine 276, 290–292 (SGG), glutamate 296, and arginine 313.

The protein belongs to the UDP-N-acetylglucosamine 2-epimerase family. In terms of assembly, homodimer.

The protein resides in the cytoplasm. It catalyses the reaction UDP-N-acetyl-alpha-D-glucosamine = UDP-N-acetyl-alpha-D-mannosamine. Its pathway is bacterial outer membrane biogenesis; enterobacterial common antigen biosynthesis. Allosterically activated by its substrate, UDP-GlcNAc. Catalyzes the reversible epimerization at C-2 of UDP-N-acetylglucosamine (UDP-GlcNAc) and thereby provides bacteria with UDP-N-acetylmannosamine (UDP-ManNAc), the activated donor of ManNAc residues. Also involved in bacteriophage N4 adsorption. In Escherichia coli (strain K12), this protein is UDP-N-acetylglucosamine 2-epimerase.